We begin with the raw amino-acid sequence, 240 residues long: 4-hydroxy-tetrahydrodipicolinate reductase (240 aa).

Residues 79–81 (ATT) and 103–106 (SANM) each bind NAD(+). The active-site Proton donor/acceptor is His135. A (S)-2,3,4,5-tetrahydrodipicolinate-binding site is contributed by His136. Residue Lys139 is the Proton donor of the active site. Position 145-146 (145-146 (GT)) interacts with (S)-2,3,4,5-tetrahydrodipicolinate.

It belongs to the DapB family.

It localises to the cytoplasm. The catalysed reaction is (S)-2,3,4,5-tetrahydrodipicolinate + NAD(+) + H2O = (2S,4S)-4-hydroxy-2,3,4,5-tetrahydrodipicolinate + NADH + H(+). The enzyme catalyses (S)-2,3,4,5-tetrahydrodipicolinate + NADP(+) + H2O = (2S,4S)-4-hydroxy-2,3,4,5-tetrahydrodipicolinate + NADPH + H(+). It participates in amino-acid biosynthesis; L-lysine biosynthesis via DAP pathway; (S)-tetrahydrodipicolinate from L-aspartate: step 4/4. In terms of biological role, catalyzes the conversion of 4-hydroxy-tetrahydrodipicolinate (HTPA) to tetrahydrodipicolinate. The chain is 4-hydroxy-tetrahydrodipicolinate reductase from Staphylococcus epidermidis (strain ATCC 12228 / FDA PCI 1200).